Reading from the N-terminus, the 312-residue chain is Olfactory receptor 6C74 (312 aa).

At Met-1–Val-23 the chain is on the extracellular side. N-linked (GlcNAc...) asparagine glycosylation is present at Asn-3. The chain crosses the membrane as a helical span at residues Ile-24–Ile-44. Topologically, residues Thr-45–Asn-63 are cytoplasmic. Residues Phe-64 to Ala-84 form a helical membrane-spanning segment. At Thr-85–Cys-95 the chain is on the extracellular side. Residues Cys-95 and Cys-177 are joined by a disulfide bond. Residues Ala-96–Met-116 traverse the membrane as a helical segment. The Cytoplasmic portion of the chain corresponds to Ser-117–Ser-140. Residues Leu-141–Gly-161 traverse the membrane as a helical segment. At Leu-162–Glu-194 the chain is on the extracellular side. The chain crosses the membrane as a helical span at residues Leu-195–Ser-215. Residues Tyr-216–Ser-237 are Cytoplasmic-facing. A helical transmembrane segment spans residues Thr-238 to Val-258. The Extracellular segment spans residues Lys-259–Asn-269. A helical transmembrane segment spans residues Lys-270–Leu-290. The Cytoplasmic portion of the chain corresponds to Arg-291–Lys-312.

The protein belongs to the G-protein coupled receptor 1 family.

It is found in the cell membrane. In terms of biological role, odorant receptor. The protein is Olfactory receptor 6C74 (OR6C74) of Homo sapiens (Human).